The chain runs to 342 residues: AA9 family lytic polysaccharide monooxygenase AA9-X282 (342 aa).

An N-terminal signal peptide occupies residues 1–18 (MKSFASLLFLAATAAAHA). Histidine 17 serves as a coordination point for Cu(2+). Residues threonine 19 and threonine 57 each carry the phosphothreonine modification. Position 59 is a phosphoserine (serine 59). Residues cysteine 63 and cysteine 181 are joined by a disulfide bond. Histidine 93 is a Cu(2+) binding site. Positions 167 and 176 each coordinate O2. Residue tyrosine 178 coordinates Cu(2+). N-linked (GlcNAc...) asparagine glycosylation occurs at asparagine 189. The interval 233–263 (SPATVANTPYPTTATWNTALQPTTVPTVTPP) is X282 extension. The tract at residues 281–302 (VTSQPPVPPTTQQPPVVTPTAP) is disordered. Positions 285-302 (PPVPPTTQQPPVVTPTAP) are enriched in pro residues. In terms of domain architecture, CBM1 spans 306–342 (PLQTQYGQCGGQGWNGPTQCQPPYTCTASNQWYHQCL).

It belongs to the polysaccharide monooxygenase AA9 family. Cu(2+) serves as cofactor.

It localises to the secreted. The catalysed reaction is [(1-&gt;4)-beta-D-glucosyl]n+m + reduced acceptor + O2 = 4-dehydro-beta-D-glucosyl-[(1-&gt;4)-beta-D-glucosyl]n-1 + [(1-&gt;4)-beta-D-glucosyl]m + acceptor + H2O.. Functionally, lytic polysaccharide monooxygenase (LPMO) that depolymerizes crystalline and amorphous polysaccharides via the oxidation of scissile alpha- or beta-(1-4)-glycosidic bonds, yielding C1 oxidation products. Catalysis by LPMOs requires the reduction of the active-site copper from Cu(II) to Cu(I) by a reducing agent and H(2)O(2) or O(2) as a cosubstrate. Shows only weak binding properties to cellulose, and low cellulolytic oxidative activity which questions the involvement of X282 extension-containing AA9 proteins in the degradation of plant cell wall and opens new avenues as to the divergence of function of some AA9 members. In Coprinopsis cinerea (strain Okayama-7 / 130 / ATCC MYA-4618 / FGSC 9003) (Inky cap fungus), this protein is AA9 family lytic polysaccharide monooxygenase AA9-X282.